A 116-amino-acid polypeptide reads, in one-letter code: Large ribosomal subunit protein bL17 (116 aa).

It belongs to the bacterial ribosomal protein bL17 family. In terms of assembly, part of the 50S ribosomal subunit. Contacts protein L32.

This is Large ribosomal subunit protein bL17 from Helicobacter pylori (strain J99 / ATCC 700824) (Campylobacter pylori J99).